The following is a 316-amino-acid chain: MTVEQKTIGIVGARGHTGSELIKLVAAHPQLHLSFVSSRELAGQRVAEHNDAYQGQLRYENLDAAAVAAKAADVVILALPNGMAEPFVAAIDAAAPQTLVIDLSADYRFDPAWYYGLPELTRGSYAGQKRISNPGCYATAMQLTIAPLLDQLAGPPQCFGVSGYSGAGTTPSDKNNPALLSNNVMPYALTNHMHEREVSAQLGVPVEFMPHVAPHFRGITMTVNLWLQQPLTREQIQARYTQRYADEPLIEIVDEAPWVSRIAGKHGVQIGGVTLAPGNKRVVVVATLDNLLKGAATQAMQNLNLALGWDELMAIR.

The active site involves Cys-136.

The protein belongs to the NAGSA dehydrogenase family. Type 1 subfamily.

The protein localises to the cytoplasm. The catalysed reaction is N-acetyl-L-glutamate 5-semialdehyde + phosphate + NADP(+) = N-acetyl-L-glutamyl 5-phosphate + NADPH + H(+). Its pathway is amino-acid biosynthesis; L-arginine biosynthesis; N(2)-acetyl-L-ornithine from L-glutamate: step 3/4. Its function is as follows. Catalyzes the NADPH-dependent reduction of N-acetyl-5-glutamyl phosphate to yield N-acetyl-L-glutamate 5-semialdehyde. The chain is N-acetyl-gamma-glutamyl-phosphate reductase from Xanthomonas euvesicatoria pv. vesicatoria (strain 85-10) (Xanthomonas campestris pv. vesicatoria).